The primary structure comprises 343 residues: Aspartate carbamoyltransferase catalytic subunit (343 aa).

Carbamoyl phosphate is bound by residues arginine 91 and threonine 92. Lysine 119 is an L-aspartate binding site. The carbamoyl phosphate site is built by arginine 141, histidine 171, and glutamine 174. L-aspartate contacts are provided by arginine 204 and arginine 259. Carbamoyl phosphate-binding residues include glycine 300 and proline 301.

This sequence belongs to the aspartate/ornithine carbamoyltransferase superfamily. ATCase family. As to quaternary structure, heterododecamer (2C3:3R2) of six catalytic PyrB chains organized as two trimers (C3), and six regulatory PyrI chains organized as three dimers (R2).

It carries out the reaction carbamoyl phosphate + L-aspartate = N-carbamoyl-L-aspartate + phosphate + H(+). It functions in the pathway pyrimidine metabolism; UMP biosynthesis via de novo pathway; (S)-dihydroorotate from bicarbonate: step 2/3. In terms of biological role, catalyzes the condensation of carbamoyl phosphate and aspartate to form carbamoyl aspartate and inorganic phosphate, the committed step in the de novo pyrimidine nucleotide biosynthesis pathway. The polypeptide is Aspartate carbamoyltransferase catalytic subunit (Burkholderia ambifaria (strain MC40-6)).